We begin with the raw amino-acid sequence, 1387 residues long: Dicer-like protein 2-1 (1387 aa).

The Helicase ATP-binding domain maps to 26–205 (MFEASLKENI…LLKIESNLDA (180 aa)). 39-46 (MGTGSGKT) contacts ATP. Residues 146–149 (DEAH) carry the DEAH box motif. The region spanning 370–535 (KFRSLLEFLD…AYEDDERRLR (166 aa)) is the Helicase C-terminal domain. In terms of domain architecture, Dicer dsRNA-binding fold spans 565–659 (AVAHLNHFCA…LPFKRNLELK (95 aa)). RNase III domains are found at residues 915–1055 (ATRL…IDGG) and 1094–1277 (DDHL…IDSH). Positions 1133, 1263, and 1266 each coordinate Mg(2+).

The protein belongs to the helicase family. Dicer subfamily. Mg(2+) serves as cofactor. It depends on Mn(2+) as a cofactor.

In terms of biological role, dicer-like endonuclease involved in cleaving double-stranded RNA in the RNA interference (RNAi) pathway. Produces 21 to 25 bp dsRNAs (siRNAs) which target the selective destruction of homologous RNAs leading to sequence-specific suppression of gene expression, called post-transcriptional gene silencing (PTGS). Part of a broad host defense response against viral infection and transposons. The chain is Dicer-like protein 2-1 (dcl2-1) from Aspergillus niger (strain ATCC MYA-4892 / CBS 513.88 / FGSC A1513).